The primary structure comprises 132 residues: Profilin-1 (132 aa).

Belongs to the profilin family. Occurs in many kinds of cells as a complex with monomeric actin in a 1:1 ratio. In terms of tissue distribution, expressed in the nerve ring during late embryonic stages. In adults, expression is seen in the neurons, vulva and somatic gonad.

Its subcellular location is the cytoplasm. It is found in the cytoskeleton. Its function is as follows. Binds to actin and affects the structure of the cytoskeleton. At high concentrations, profilin prevents the polymerization of actin, whereas it enhances it at low concentrations. By binding to PIP2, it inhibits the formation of IP3 and DG. Also binds to poly(L-proline) and phosphatidylinositol 4,5-bisphosphate micelles. The polypeptide is Profilin-1 (pfn-1) (Caenorhabditis elegans).